Here is a 100-residue protein sequence, read N- to C-terminus: Integration host factor subunit alpha (100 aa).

Residues Asp-54 to Pro-73 form a disordered region.

It belongs to the bacterial histone-like protein family. Heterodimer of an alpha and a beta chain.

This protein is one of the two subunits of integration host factor, a specific DNA-binding protein that functions in genetic recombination as well as in transcriptional and translational control. The sequence is that of Integration host factor subunit alpha from Pseudomonas aeruginosa (strain UCBPP-PA14).